The following is a 297-amino-acid chain: N-acetylmannosamine kinase (297 aa).

ATP-binding positions include 5–12 (ALDIGGTK) and 132–139 (GVGGGIIL). Positions 156, 166, 168, and 173 each coordinate Zn(2+).

This sequence belongs to the ROK (NagC/XylR) family. NanK subfamily. As to quaternary structure, homodimer.

It catalyses the reaction an N-acyl-D-mannosamine + ATP = an N-acyl-D-mannosamine 6-phosphate + ADP + H(+). It functions in the pathway amino-sugar metabolism; N-acetylneuraminate degradation; D-fructose 6-phosphate from N-acetylneuraminate: step 2/5. Functionally, catalyzes the phosphorylation of N-acetylmannosamine (ManNAc) to ManNAc-6-P. This chain is N-acetylmannosamine kinase, found in Pasteurella multocida (strain Pm70).